The sequence spans 451 residues: Chromosomal replication initiator protein DnaA (451 aa).

Positions 1 to 72 (MQSIEDIWQE…ANILQEITGR (72 aa)) are domain I, interacts with DnaA modulators. The domain II stretch occupies residues 72 to 108 (RLFDVRFIDGEQEENFEYTVIKPNPALDEDGIEIGKH). A domain III, AAA+ region region spans residues 109-325 (MLNPRYVFDT…GALIRVVAYS (217 aa)). ATP contacts are provided by glycine 153, glycine 155, lysine 156, and threonine 157. A domain IV, binds dsDNA region spans residues 326-451 (SLVNKDITAG…KNLRKAQNMF (126 aa)).

The protein belongs to the DnaA family. In terms of assembly, oligomerizes as a right-handed, spiral filament on DNA at oriC.

It localises to the cytoplasm. Plays an essential role in the initiation and regulation of chromosomal replication. ATP-DnaA binds to the origin of replication (oriC) to initiate formation of the DNA replication initiation complex once per cell cycle. Binds the DnaA box (a 9 base pair repeat at the origin) and separates the double-stranded (ds)DNA. Forms a right-handed helical filament on oriC DNA; dsDNA binds to the exterior of the filament while single-stranded (ss)DNA is stabiized in the filament's interior. The ATP-DnaA-oriC complex binds and stabilizes one strand of the AT-rich DNA unwinding element (DUE), permitting loading of DNA polymerase. After initiation quickly degrades to an ADP-DnaA complex that is not apt for DNA replication. Binds acidic phospholipids. The protein is Chromosomal replication initiator protein DnaA of Listeria monocytogenes serotype 4b (strain F2365).